We begin with the raw amino-acid sequence, 585 residues long: Optineurin (585 aa).

The tract at residues 1–32 (MSHQPLSCLTEKGDSSCETPGNGPSNMVHPNL) is disordered. Over residues 16–25 (SCETPGNGPS) the composition is skewed to polar residues. Residues 38 to 181 (EELLQQMKEL…VSELQLKLNS (144 aa)) are a coiled coil. Residues 58–220 (MKLNNQAMKG…GPTRTDSISM (163 aa)) form an interaction with Rab8 region. The LIR motif lies at 187 to 192 (DSFVEI). Residues Ser-188 and Ser-209 each carry the phosphoserine modification. 2 disordered regions span residues 200 to 220 (EGAM…SISM) and 269 to 299 (FEKK…PESV). A coiled-coil region spans residues 244–512 (CLREGNQKVE…LLKENNDFED (269 aa)). Phosphoserine is present on Ser-346. Positions 415–585 (TKQQAEKVDK…LQIHVMDCII (171 aa)) are interaction with HD. The interaction with MYO6 stretch occupies residues 416–525 (KQQAEKVDKV…RQSLMEMQCR (110 aa)). Positions 478–483 (DFHAER) match the UBAN motif. Phosphoserine is present on Ser-531. A CCHC NOA-type zinc finger spans residues 555–585 (PRSIPIHSCPKCGEVLPDIDTLQIHVMDCII). The Zn(2+) site is built by Cys-563, Cys-566, His-579, and Cys-583.

In terms of assembly, self-associates. Interacts with HD. Interacts with GTF3A. Interacts with MYO6. Interacts (via UBAN) with ubiquitinated TFRC. Interacts with GTP-bound Rab8 (RAB8A and/or RAB8B). Interacts with TBC1D17. Interacts with TBK1. Interacts with TRAF3. Binds to linear ubiquitin chains. Interacts with LC3 family members MAP1LC3A, MAP1LC3B, GABARAP, GABARAPL1 and GABARAPL2; OPTN phosphorylation increases the association (at least with MAP1LC3B). Interacts with RAB12; the interaction may be indirect. Interacts with TBK1; this interaction leads to the Golgi localization of TBK1 and its subsequent activation. Interacts with palmitoyltransferase ZDHHC17/HIP14; the interaction does not lead to palmitoylation of OPTN. Interacts with CYLD. Interacts with TOM1; the interaction is indirect and is mediated by MYO6, which acts as a bridge between TOM1 and OPTN. Interacts with USP12; the interaction is independent of USP12 deubiquitinase activity and may be involved in regulation of autophagic flux. Post-translationally, phosphorylated by TBK1, leading to restrict bacterial proliferation in case of infection.

The protein localises to the cytoplasm. The protein resides in the perinuclear region. Its subcellular location is the golgi apparatus. It is found in the trans-Golgi network. It localises to the cytoplasmic vesicle. The protein localises to the autophagosome. The protein resides in the recycling endosome. Functionally, plays an important role in the maintenance of the Golgi complex, in membrane trafficking, in exocytosis, through its interaction with myosin VI and Rab8. Links myosin VI to the Golgi complex and plays an important role in Golgi ribbon formation. Negatively regulates the induction of IFNB in response to RNA virus infection. Plays a neuroprotective role in the eye and optic nerve. Probably part of the TNF-alpha signaling pathway that can shift the equilibrium toward induction of cell death. May act by regulating membrane trafficking and cellular morphogenesis via a complex that contains Rab8 and huntingtin (HD). Mediates the interaction of Rab8 with the probable GTPase-activating protein TBC1D17 during Rab8-mediated endocytic trafficking, such as that of transferrin receptor (TFRC/TfR); regulates Rab8 recruitment to tubules emanating from the endocytic recycling compartment. Autophagy receptor that interacts directly with both the cargo to become degraded and an autophagy modifier of the MAP1 LC3 family; targets ubiquitin-coated bacteria (xenophagy) and appears to function in the same pathway as SQSTM1 and CALCOCO2/NDP52. The polypeptide is Optineurin (Optn) (Rattus norvegicus (Rat)).